The sequence spans 411 residues: MTAQTPIHVYSEIGKLKKVLLHRPGKEIENLMPDYLERLLFDDIPFLEDAQKEHDAFAQALRDEGIEVLYLETLAAESLVTPEIREAFIDEYLSEANIRGRATKKAIRELLMAIEDNQELIEKTMAGVQKSELPEIPASEKGLTDLVESNYPFAIDPMPNLYFTRDPFATIGTGVSLNHMFSETRNRETLYGKYIFTHHPIYGGGKVPMVYDRNETTRIEGGDELVLSKDVLAVGISQRTDAASIEKLLVNIFKQNLGFKKVLAFEFANNRKFMHLDTVFTMVDYDKFTIHPEIEGDLRVYSVTYDNEELHIIEEKGDLAELLAANLGVEKVDLIRCGGDNLVAAGREQWNDGSNTLTIAPGVVVVYNRNTITNAILESKGLKLIKIHGSELVRGRGGPRCMSMPFEREDI.

Cysteine 401 (amidino-cysteine intermediate) is an active-site residue.

Belongs to the arginine deiminase family.

It localises to the cytoplasm. The catalysed reaction is L-arginine + H2O = L-citrulline + NH4(+). Its pathway is amino-acid degradation; L-arginine degradation via ADI pathway; carbamoyl phosphate from L-arginine: step 1/2. The chain is Arginine deiminase from Streptococcus pyogenes serotype M2 (strain MGAS10270).